A 314-amino-acid polypeptide reads, in one-letter code: MRIVFMGTSHFAIPSLKALIASEHEIAGVVSQPDKQRGRGRKVTPTPVKEIAEQYKLELLQTANIKTPESIKRIKQWKPELIIVVSYGQIIPLSILEYPRHGCINVHASLLPRYRGAAPVQRALMDGIKSSGITIMFMDEGLDTGDIIMQEAIAVDDNINHGELEKILADMGADLLLQVVDRLVQGEKLPRVVQDDSQASYAARISKEDEIINWSEPAYAIHNRIRALNPQPGAYSYINGTKVKIFASKVRSEAGSGVIAEVIEVDKNTFQVQTGEGILEVLEIQKAGKKRMPTSEFLKGFTLHPGVLLGSKEG.

109 to 112 (SLLP) serves as a coordination point for (6S)-5,6,7,8-tetrahydrofolate.

It belongs to the Fmt family.

It catalyses the reaction L-methionyl-tRNA(fMet) + (6R)-10-formyltetrahydrofolate = N-formyl-L-methionyl-tRNA(fMet) + (6S)-5,6,7,8-tetrahydrofolate + H(+). Functionally, attaches a formyl group to the free amino group of methionyl-tRNA(fMet). The formyl group appears to play a dual role in the initiator identity of N-formylmethionyl-tRNA by promoting its recognition by IF2 and preventing the misappropriation of this tRNA by the elongation apparatus. The chain is Methionyl-tRNA formyltransferase from Syntrophomonas wolfei subsp. wolfei (strain DSM 2245B / Goettingen).